The primary structure comprises 289 residues: Digeranylgeranylglyceryl phosphate synthase (289 aa).

The next 8 membrane-spanning stretches (helical) occupy residues 18 to 38 (LMAG…LISG), 47 to 67 (AFPF…SGAG), 99 to 119 (FYFS…INSI), 120 to 140 (CGSI…TLKG), 163 to 183 (IFGF…ALAI), 218 to 238 (LAVL…FMSV), 243 to 263 (YIYL…QLLV), and 269 to 289 (KSSK…IAGV).

Belongs to the UbiA prenyltransferase family. DGGGP synthase subfamily. Requires Mg(2+) as cofactor.

It localises to the cell membrane. It catalyses the reaction sn-3-O-(geranylgeranyl)glycerol 1-phosphate + (2E,6E,10E)-geranylgeranyl diphosphate = 2,3-bis-O-(geranylgeranyl)-sn-glycerol 1-phosphate + diphosphate. The protein operates within membrane lipid metabolism; glycerophospholipid metabolism. Its function is as follows. Prenyltransferase that catalyzes the transfer of the geranylgeranyl moiety of geranylgeranyl diphosphate (GGPP) to the C2 hydroxyl of (S)-3-O-geranylgeranylglyceryl phosphate (GGGP). This reaction is the second ether-bond-formation step in the biosynthesis of archaeal membrane lipids. This chain is Digeranylgeranylglyceryl phosphate synthase, found in Methanosarcina mazei (strain ATCC BAA-159 / DSM 3647 / Goe1 / Go1 / JCM 11833 / OCM 88) (Methanosarcina frisia).